A 266-amino-acid polypeptide reads, in one-letter code: Glucosamine-6-phosphate deaminase (266 aa).

Catalysis depends on aspartate 72, which acts as the Proton acceptor; for enolization step. Aspartate 141 functions as the For ring-opening step in the catalytic mechanism. Histidine 143 (proton acceptor; for ring-opening step) is an active-site residue. Glutamate 148 (for ring-opening step) is an active-site residue.

This sequence belongs to the glucosamine/galactosamine-6-phosphate isomerase family. NagB subfamily. In terms of assembly, homohexamer.

The enzyme catalyses alpha-D-glucosamine 6-phosphate + H2O = beta-D-fructose 6-phosphate + NH4(+). Its pathway is amino-sugar metabolism; N-acetylneuraminate degradation; D-fructose 6-phosphate from N-acetylneuraminate: step 5/5. Allosterically activated by N-acetylglucosamine 6-phosphate (GlcNAc6P). Catalyzes the reversible isomerization-deamination of glucosamine 6-phosphate (GlcN6P) to form fructose 6-phosphate (Fru6P) and ammonium ion. This chain is Glucosamine-6-phosphate deaminase, found in Klebsiella pneumoniae subsp. pneumoniae (strain ATCC 700721 / MGH 78578).